The following is a 128-amino-acid chain: Large ribosomal subunit protein uL22 (128 aa).

It belongs to the universal ribosomal protein uL22 family. As to quaternary structure, part of the 50S ribosomal subunit.

Its function is as follows. This protein binds specifically to 23S rRNA; its binding is stimulated by other ribosomal proteins, e.g. L4, L17, and L20. It is important during the early stages of 50S assembly. It makes multiple contacts with different domains of the 23S rRNA in the assembled 50S subunit and ribosome. The globular domain of the protein is located near the polypeptide exit tunnel on the outside of the subunit, while an extended beta-hairpin is found that lines the wall of the exit tunnel in the center of the 70S ribosome. The polypeptide is Large ribosomal subunit protein uL22 (Rhodopseudomonas palustris (strain BisB18)).